We begin with the raw amino-acid sequence, 541 residues long: Zinc finger protein 513 (541 aa).

The disordered stretch occupies residues 1 to 118; it reads MPRRKQSHPQ…GEARGERPGP (118 aa). Positions 44–57 are enriched in acidic residues; the sequence is LEFEEEEEEEEGDG. A phosphoserine mark is found at Ser85 and Ser96. A compositionally biased stretch (basic and acidic residues) spans 103–115; it reads EPARGPGEARGER. 8 consecutive C2H2-type zinc fingers follow at residues 150–172, 178–200, 206–228, 360–382, 388–410, 416–438, 444–466, and 472–494; these read YSCR…MQTH, FRCG…TRTH, YRCP…QRTH, FACS…MKTH, FRCA…QRVH, YKCP…GRIH, FRCS…MLRH, and FRCA…QKVH. A disordered region spans residues 492 to 541; sequence KVHGHGGAGGPGLSASEGWAPPHSPPSVLSSRGPPALGTAGSRAVHTDSS.

It belongs to the krueppel C2H2-type zinc-finger protein family. Binds DNA. Can associate with the proximal promoter regions of PAX6 and SP4, and their known targets including ARR3, RHO, OPN1MW2 and OPN1SW. In terms of tissue distribution, in the retina, expressed in the outer and inner nuclear layers, and the ganglion cell layer.

Its subcellular location is the nucleus. In terms of biological role, transcriptional regulator that plays a role in retinal development and maintenance. In Homo sapiens (Human), this protein is Zinc finger protein 513 (ZNF513).